Reading from the N-terminus, the 289-residue chain is DegV domain-containing protein YteA (289 aa).

Residues 3-284 (FQIMTDSTAD…DGTIAIFSIS (282 aa)) enclose the DegV domain. Positions 62 and 94 each coordinate hexadecanoate.

In terms of biological role, may bind long-chain fatty acids, such as palmitate, and may play a role in lipid transport or fatty acid metabolism. The chain is DegV domain-containing protein YteA (yteA) from Lactococcus lactis subsp. lactis (strain IL1403) (Streptococcus lactis).